We begin with the raw amino-acid sequence, 164 residues long: Serine/arginine-rich splicing factor 3 (164 aa).

Residue Met-1 is modified to N-acetylmethionine. The tract at residues 1–90 is sufficient for interaction with NXF1 and SRSP; sequence MHRDSCPLDC…SNGEKRSRNR (90 aa). Phosphoserine is present on Ser-5. The RRM domain maps to 10–83; the sequence is CKVYVGNLGN…CRVRVELSNG (74 aa). Lys-23 is subject to N6-acetyllysine. Positions 81–164 are disordered; it reads SNGEKRSRNR…RSRSRSNERK (84 aa). The segment covering 107–128 has biased composition (basic residues); the sequence is RSPPPRRRSPRRRSFSRSRSRS. Residues 119–133 form a B-1 repeat; the sequence is RSFSRSRSRSLSRDR. Residues 119–164 are 2 X approximate repeats, basic; that stretch reads RSFSRSRSRSLSRDRRRERSLSRERNHKPSRSFSRSRSRSRSNERK. Positions 129–142 are enriched in basic and acidic residues; that stretch reads LSRDRRRERSLSRE. A compositionally biased stretch (basic residues) spans 143–158; it reads RNHKPSRSFSRSRSRS. The B-2 repeat unit spans residues 149–164; it reads RSFSRSRSRSRSNERK.

The protein belongs to the splicing factor SR family. Interacts with CPSF6. Interacts with RBMY1A1. Interacts with SREK1/SFRS12. Interacts with NXF1. Interacts with YTHDC1, leading to recruitment to RNA elements adjacent to m6A sites. Interacts with SRSP; increases SRSF3 binding to specific exons. In terms of processing, phosphorylated by CLK1, CLK2, CLK3 and CLK4. Extensively phosphorylated on serine residues in the RS domain.

The protein localises to the nucleus. It is found in the nucleus speckle. The protein resides in the cytoplasm. In terms of biological role, splicing factor, which binds the consensus motif 5'-C[ACU][AU]C[ACU][AC]C-3' within pre-mRNA and promotes specific exons inclusion during alternative splicing. Interaction with YTHDC1, a RNA-binding protein that recognizes and binds N6-methyladenosine (m6A)-containing RNAs, promotes recruitment of SRSF3 to its mRNA-binding elements adjacent to m6A sites within exons. Also functions as an adapter involved in mRNA nuclear export. Binds mRNA which is thought to be transferred to the NXF1-NXT1 heterodimer for export (TAP/NXF1 pathway); enhances NXF1-NXT1 RNA-binding activity. Involved in nuclear export of m6A-containing mRNAs via interaction with YTHDC1: interaction with YTHDC1 facilitates m6A-containing mRNA-binding to both SRSF3 and NXF1, promoting mRNA nuclear export. This Bos taurus (Bovine) protein is Serine/arginine-rich splicing factor 3 (SRSF3).